Reading from the N-terminus, the 338-residue chain is Malate dehydrogenase, mitochondrial (338 aa).

A mitochondrion-targeting transit peptide spans 1–24 (MLSALARPAGAALRRSFSTSXQNN). NAD(+)-binding positions include 31-37 (GASGGIG) and Asp-57. Ser-33 is a glycosylation site (O-linked (GlcNAc) serine). Residues Lys-78 and Lys-91 each carry the N6-acetyllysine; alternate modification. N6-succinyllysine; alternate is present on residues Lys-78 and Lys-91. Substrate-binding residues include Arg-104 and Arg-110. Residues Asn-117 and 140-142 (ISN) each bind NAD(+). Asn-142 lines the substrate pocket. Lys-165 is subject to N6-acetyllysine. Arg-176 is a binding site for substrate. Lys-185 is subject to N6-acetyllysine; alternate. An N6-succinyllysine; alternate modification is found at Lys-185. His-200 functions as the Proton acceptor in the catalytic mechanism. An N6-succinyllysine modification is found at Lys-203. Lys-215 and Lys-239 each carry N6-acetyllysine; alternate. Lys-215 and Lys-239 each carry N6-succinyllysine; alternate. Lys-239 is subject to N6-malonyllysine; alternate. Ser-246 bears the Phosphoserine mark. Met-251 is an NAD(+) binding site. Residue Lys-269 is modified to N6-succinyllysine. 5 positions are modified to N6-acetyllysine; alternate: Lys-296, Lys-301, Lys-307, Lys-314, and Lys-324. 5 positions are modified to N6-succinyllysine; alternate: Lys-296, Lys-301, Lys-307, Lys-314, and Lys-324. The residue at position 307 (Lys-307) is an N6-malonyllysine; alternate. Ser-326 bears the Phosphoserine mark. Lys-328, Lys-329, and Lys-335 each carry N6-acetyllysine; alternate. At Lys-328 the chain carries N6-succinyllysine; alternate. Lys-329 is subject to N6-malonyllysine; alternate. Lys-335 carries the N6-succinyllysine; alternate modification.

Belongs to the LDH/MDH superfamily. MDH type 1 family. As to quaternary structure, homodimer. Acetylation is enhanced after treatment either with trichostin A (TCA) or with nicotinamide (NAM) with the appearance of tri- and tetraacetylations. Glucose also increases acetylation.

The protein resides in the mitochondrion matrix. The enzyme catalyses (S)-malate + NAD(+) = oxaloacetate + NADH + H(+). Its activity is regulated as follows. Enzyme activity is enhanced by acetylation. The sequence is that of Malate dehydrogenase, mitochondrial (MDH2) from Sus scrofa (Pig).